The following is a 40-amino-acid chain: Large ribosomal subunit protein bL36 (40 aa).

This sequence belongs to the bacterial ribosomal protein bL36 family.

The polypeptide is Large ribosomal subunit protein bL36 (Corynebacterium kroppenstedtii (strain DSM 44385 / JCM 11950 / CIP 105744 / CCUG 35717)).